The following is a 303-amino-acid chain: Signal recognition particle receptor FtsY (303 aa).

GTP is bound by residues 108 to 115 (GVNGAGKT), 190 to 194 (DTAGR), and 254 to 257 (TKLD).

Belongs to the GTP-binding SRP family. FtsY subfamily. Part of the signal recognition particle protein translocation system, which is composed of SRP and FtsY. SRP is a ribonucleoprotein composed of Ffh and a 4.5S RNA molecule.

It localises to the cell inner membrane. The protein localises to the cytoplasm. It catalyses the reaction GTP + H2O = GDP + phosphate + H(+). Involved in targeting and insertion of nascent membrane proteins into the cytoplasmic membrane. Acts as a receptor for the complex formed by the signal recognition particle (SRP) and the ribosome-nascent chain (RNC). Interaction with SRP-RNC leads to the transfer of the RNC complex to the Sec translocase for insertion into the membrane, the hydrolysis of GTP by both Ffh and FtsY, and the dissociation of the SRP-FtsY complex into the individual components. This Rickettsia bellii (strain RML369-C) protein is Signal recognition particle receptor FtsY.